A 457-amino-acid polypeptide reads, in one-letter code: Acetylcholine receptor subunit alpha (457 aa).

Residues M1–G20 form the signal peptide. Residues S21 to L232 are Extracellular-facing. Cystine bridges form between C148-C162 and C212-C213. Residue N161 is glycosylated (N-linked (GlcNAc...) asparagine). A helical membrane pass occupies residues Y233–F253. Over Y254 to T264 the chain is Cytoplasmic. The chain crosses the membrane as a helical span at residues L265 to P285. Over S286–K296 the chain is Extracellular. Residues Y297 to N317 form a helical membrane-spanning segment. Residues T318–D427 lie on the Cytoplasmic side of the membrane. Residues H428–G448 traverse the membrane as a helical segment. Topologically, residues R449 to G457 are extracellular.

This sequence belongs to the ligand-gated ion channel (TC 1.A.9) family. Acetylcholine receptor (TC 1.A.9.1) subfamily. Alpha-1/CHRNA1 sub-subfamily. As to quaternary structure, one of the alpha chains that assemble within the acetylcholine receptor, a pentamer of two alpha chains, a beta, a delta, and a gamma (in immature muscle) or epsilon (in mature muscle) chains. The muscle heteropentamer composed of alpha-1, beta-1, delta, epsilon subunits interacts with the alpha-conotoxin ImII. In terms of assembly, is able to interact with other subunits of the acetylcholine receptor but is not assembled into functional acetylcholine-gated cation-selective channels. In terms of tissue distribution, isoform 1 is only expressed in skeletal muscle. Isoform 2 is constitutively expressed in skeletal muscle, brain, heart, kidney, liver, lung and thymus.

The protein localises to the postsynaptic cell membrane. Its subcellular location is the cell membrane. It carries out the reaction K(+)(in) = K(+)(out). The enzyme catalyses Na(+)(in) = Na(+)(out). Upon acetylcholine binding, the AChR responds by an extensive change in conformation that affects all subunits and leads to opening of an ion-conducting channel across the plasma membrane. In terms of biological role, non functional acetylcholine receptor alpha subunit which is not integrated into functional acetylcholine-gated cation-selective channels. This Homo sapiens (Human) protein is Acetylcholine receptor subunit alpha.